Consider the following 145-residue polypeptide: Phospholipase A2 phospholipin (145 aa).

Positions 1–15 are cleaved as a signal peptide; sequence MVDLARRCSGSTEGR. 3 residues coordinate Ca(2+): tryptophan 24, glycine 26, and glycine 28. 5 disulfides stabilise this stretch: cysteine 25–cysteine 46, cysteine 45–cysteine 84, cysteine 52–cysteine 77, cysteine 75–cysteine 116, and cysteine 121–cysteine 132. Histidine 49 is an active-site residue. Residue aspartate 50 coordinates Ca(2+). A propeptide spanning residues 124–128 is cleaved from the precursor; it reads KRSGR.

This sequence belongs to the phospholipase A2 family. Group III subfamily. In terms of assembly, heterodimer composed of a small subunit and a large subunit; disulfid-linked. The cofactor is Ca(2+). In terms of tissue distribution, expressed by the venom gland.

It is found in the secreted. The enzyme catalyses a 1,2-diacyl-sn-glycero-3-phosphocholine + H2O = a 1-acyl-sn-glycero-3-phosphocholine + a fatty acid + H(+). Functionally, scorpion venom phospholipase A2 (PLA2) that contains enzymatic activity, but does not inhibit ryanodine receptors in contrary to imperatoxin-1, another heterodimer of P.imperator venom. PLA2 catalyzes the calcium-dependent hydrolysis of the 2-acyl groups in 3-sn-phosphoglycerides. This is Phospholipase A2 phospholipin from Pandinus imperator (Emperor scorpion).